The sequence spans 858 residues: Phospholipase D gamma 1 (858 aa).

A C2 domain is found at 27–163 (PFATSSGSLR…CSGNRIEGLF (137 aa)). Asp225 contributes to the Ca(2+) binding site. Residues 364–399 (TIYTHHQKTVIVDAEAAQNRRKIVAFVGGLDLCNGR) form the PLD phosphodiesterase 1 domain. Active-site residues include His369, Lys371, and Asp376. A 1,2-diacyl-sn-glycero-3-phosphate is bound at residue His369. 2 residues coordinate Ca(2+): His405 and His437. Position 565 (Gln565) interacts with a 1,2-diacyl-sn-glycero-3-phosphate. Ser680 bears the Phosphoserine mark. The 28-residue stretch at 704–731 (FMIYVHSKGMVVDDEFVLIGSANINQRS) folds into the PLD phosphodiesterase 2 domain. Residues His709, Lys711, and Asp716 contribute to the active site. His709 provides a ligand contact to a 1,2-diacyl-sn-glycero-3-phosphate. A Ca(2+)-binding site is contributed by Glu772.

Belongs to the phospholipase D family. C2-PLD subfamily. Ca(2+) serves as cofactor. In terms of tissue distribution, highly expressed in roots and flowers, moderately in stems, leaves and seedlings and low in siliques. Not detected in seeds.

Its subcellular location is the cytoplasm. It is found in the membrane. It catalyses the reaction a 1,2-diacyl-sn-glycero-3-phosphocholine + H2O = a 1,2-diacyl-sn-glycero-3-phosphate + choline + H(+). Its activity is regulated as follows. Inhibited by neomycin. Up-regulated by PIP2 binding. Its function is as follows. Hydrolyzes glycerol-phospholipids at the terminal phosphodiesteric bond to generate phosphatidic acids (PA). Plays an important role in various cellular processes, including phytohormone action, vesicular trafficking, secretion, cytoskeletal arrangement, meiosis, tumor promotion, pathogenesis, membrane deterioration and senescence. Can use phosphatidylserine (PS) and phosphatidylethanolamine (PE) as substrates only in the presence of PIP2. Can use phosphatidylcholine (PC), phosphatidylglycerol (PG) or N-acylphosphatidylethanolamine (NAPE) as substrates in the presence of PE and PIP2. Involved in membrane lipid modulation under aluminum (Al) stress and negatively modulate plant tolerance to Al. The chain is Phospholipase D gamma 1 from Arabidopsis thaliana (Mouse-ear cress).